A 296-amino-acid chain; its full sequence is Thioredoxin-related transmembrane protein 2 (296 aa).

The N-terminal stretch at 1 to 48 (MAVLAPLIALVYSVPRLSRWLAQPYYLLSALLSAAFLLVRKLPPLCHG) is a signal peptide. The Extracellular portion of the chain corresponds to 49–102 (LPTQREDGNPCDFDWREVEILMFLSAIVMMKNRRSITVEQHIGNIFMFSKVANA). The helical transmembrane segment at 103–125 (ILFFRLDIRMGLLYITLCIVFLM) threads the bilayer. A Thioredoxin domain is found at 114–270 (LLYITLCIVF…YQRAKKPSKA (157 aa)). The Cytoplasmic segment spans residues 126 to 296 (TCEPPLYMGP…VSDGENKKDK (171 aa)). Phosphoserine occurs at positions 211, 243, and 288. Residues 266 to 296 (KPSKAGDSIPEEQPVASAPTTVSDGENKKDK) form a disordered region. Residues 293 to 296 (KKDK) carry the Di-lysine motif motif.

As to quaternary structure, monomer. Homodimer; disulfide-linked. Occurs in both reduced and oxidized monomeric form. Oxidative conditions increase homodimerization. Interacts with CANX. Interacts with ATP2A2.

It localises to the endoplasmic reticulum membrane. Its subcellular location is the mitochondrion membrane. In terms of biological role, endoplasmic reticulum and mitochondria-associated protein that probably functions as a regulator of cellular redox state and thereby regulates protein post-translational modification, protein folding and mitochondrial activity. Indirectly regulates neuronal proliferation, migration, and organization in the developing brain. This is Thioredoxin-related transmembrane protein 2 (TMX2) from Pongo abelii (Sumatran orangutan).